The primary structure comprises 138 residues: Basic phospholipase A2 DsM-b1/DsM-b1' (138 aa).

Positions 1–16 (MRTLWIVAMCLIGVEG) are cleaved as a signal peptide. 7 cysteine pairs are disulfide-bonded: cysteine 42/cysteine 131, cysteine 44/cysteine 60, cysteine 59/cysteine 111, cysteine 65/cysteine 138, cysteine 66/cysteine 104, cysteine 73/cysteine 97, and cysteine 91/cysteine 102. Tyrosine 43, glycine 45, and glycine 47 together coordinate Ca(2+). The active site involves histidine 63. Ca(2+) is bound at residue aspartate 64. The active site involves aspartate 105.

Ca(2+) serves as cofactor. As to expression, expressed by the venom gland.

Its subcellular location is the secreted. The catalysed reaction is a 1,2-diacyl-sn-glycero-3-phosphocholine + H2O = a 1-acyl-sn-glycero-3-phosphocholine + a fatty acid + H(+). In terms of biological role, exhibits high hydrolytic activities and shows strong preference for the anionic micelles (dPPC with deoxycholate) to the zwitterionic micelles (dPPC with Triton X-100). PLA2 catalyzes the calcium-dependent hydrolysis of the 2-acyl groups in 3-sn-phosphoglycerides. The chain is Basic phospholipase A2 DsM-b1/DsM-b1' from Daboia siamensis (Eastern Russel's viper).